Consider the following 172-residue polypeptide: MLSGLQNPRQAAAQLMNFALILSTAFMMWKGLSVATDSPSPIVVVLSGSMEPAFQRGDLLLLWNRNMWQETAVGEIVVYNVKGKDIPIVHRVVRKFGTGDKAKLLTKGDNNNADDTDLYARGQDYLERKDIIGSVVAYFPFVGYVTILLSEHPWLKTVMLGIMGLLVVIQRE.

Residues 1-14 (MLSGLQNPRQAAAQ) lie on the Cytoplasmic side of the membrane. A helical; Signal-anchor for type II membrane protein membrane pass occupies residues 15–35 (LMNFALILSTAFMMWKGLSVA). Over 36-172 (TDSPSPIVVV…MGLLVVIQRE (137 aa)) the chain is Lumenal. Active-site charge relay system residues include Ser49, His90, and Asp115. The segment at 158 to 169 (VMLGIMGLLVVI) is C-terminal short (CTS) helix.

Belongs to the peptidase S26B family. As to quaternary structure, component of the signal peptidase complex (SPC) composed of a catalytic subunit SEC11 and three accessory subunits SPC1, SPC2 and SPC3. The complex induces a local thinning of the ER membrane which is used to measure the length of the signal peptide (SP) h-region of protein substrates. This ensures the selectivity of the complex towards h-regions shorter than 18-20 amino acids. SPC associates with the translocon complex.

The protein resides in the endoplasmic reticulum membrane. It carries out the reaction Cleavage of hydrophobic, N-terminal signal or leader sequences from secreted and periplasmic proteins.. Functionally, catalytic component of the signal peptidase complex (SPC) which catalyzes the cleavage of N-terminal signal sequences from nascent proteins as they are translocated into the lumen of the endoplasmic reticulum. Specifically cleaves N-terminal signal peptides that contain a hydrophobic alpha-helix (h-region) shorter than 18-20 amino acids. The chain is Signal peptidase complex catalytic subunit SEC11 (SEC11) from Metarhizium acridum (strain CQMa 102).